A 250-amino-acid polypeptide reads, in one-letter code: MSGHSKWATTKHKKAVIDAKRGKAFAKLIKNIEVAARTGGGDPAGNPTLYDAIQKAKKTSVPNDNIERARKRGAGEEAGGADWQTIMYEGYGPNGVAVLIECLTDNRNRAAGEVRTAMTRNGGNMADPGSVSYLFTRKGVVTLEKGDQTEDDVLMAVLDAGAEEVTDLGETFEIVSEPTDLVAVRSALQEAGIDYDSAEADFRASVEVPVDADGARKVFKLVDALEESDDVQNVYTNVDLSDEVLAELDD.

The protein belongs to the TACO1 family.

It localises to the cytoplasm. In Rhodococcus opacus (strain B4), this protein is Probable transcriptional regulatory protein ROP_68700.